Reading from the N-terminus, the 81-residue chain is Protein Vpu (81 aa).

The Extracellular portion of the chain corresponds to 1 to 7 (MQPLQIL). Residues 8-28 (SIVALVVAAIIAIVVWSIVFI) form a helical membrane-spanning segment. The Cytoplasmic segment spans residues 29-81 (LIRKILRQRKIDRLIDRIRERAEDSGNESEGIRKELSALVEMGHDAPGDIDDL). Residues S53 and S57 each carry the phosphoserine; by host CK2 modification.

Belongs to the HIV-1 VPU protein family. As to quaternary structure, homopentamer. Interacts with host CD4 and BRTC; these interactions induce proteasomal degradation of CD4. Interacts with host BST2; this interaction leads to the degradation of host BST2. Interacts with host FBXW11. Interacts with host AP1M1; this interaction plays a role in the mistrafficking and subsequent degradation of host BST2. Interacts with host RANBP2; this interaction allows Vpu to down-regulate host BLM sumoylation. Post-translationally, phosphorylated by host CK2. This phosphorylation is necessary for interaction with human BTRC and degradation of CD4.

The protein resides in the host membrane. Ion channel activity is inhibited by hexamethylene amiloride in vitro. Its function is as follows. Enhances virion budding by targeting host CD4 and Tetherin/BST2 to proteasome degradation. Degradation of CD4 prevents any unwanted premature interactions between viral Env and its host receptor CD4 in the endoplasmic reticulum. Degradation of antiretroviral protein Tetherin/BST2 is important for virion budding, as BST2 tethers new viral particles to the host cell membrane. Mechanistically, Vpu bridges either CD4 or BST2 to BTRC, a substrate recognition subunit of the Skp1/Cullin/F-box protein E3 ubiquitin ligase, induces their ubiquitination and subsequent proteasomal degradation. The alteration of the E3 ligase specificity by Vpu seems to promote the degradation of host IKBKB, leading to NF-kappa-B down-regulation and subsequent apoptosis. Acts as a viroporin that forms an oligomeric ion channel in membranes. Modulates the host DNA repair mechanisms to promote degradation of nuclear viral cDNA in cells that are already productively infected in order to suppress immune sensing and proviral hyper-integration (superinfection). Manipulates PML-NBs and modulates SUMOylation of host BLM protein thereby enhancing its DNA-end processing activity toward viral unintegrated linear DNA. Also inhibits RAD52-mediated homologous repair of viral cDNA, preventing the generation of dead-end circular forms of single copies of the long terminal repeat and permitting sustained nucleolytic attack. This is Protein Vpu from Homo sapiens (Human).